The sequence spans 389 residues: MNDRFRRELQVIEEQGLTRKLRLFSTGNESEVVMNGKKFLLFSSNNYLGLATDSRLKKKATEGISKYGTGAGGSRLTTGNFDIHEQLESEIADFKKTEAAIVFSSGYLANVGVISSVMKAGDTIFSDAWNHASIIDGCRLSKAKTIVYEHADMVDLERKLRQSHGDGLKFIVTDGVFSMDGDIAPLPKIVELAKEYKAYIMIDDAHATGVLGNDGCGTADYFGLKDEIDFTVGTLSKAIGAEGGFVSTSSIAKNYLLNNARSFIFQTALSPSAIEAAREGISIIQNEPERRKQLLKNAQYLRLKLEESGFVMKEGETPIISLIIGGSHEAMQFSAKLLDEGVFIPAIRPPTVPKGSSRLRITVMATHTIEQLDMVISKIKKIGKEMGIV.

Arg19 contacts substrate. 106 to 107 (GY) serves as a coordination point for pyridoxal 5'-phosphate. His131 contacts substrate. Pyridoxal 5'-phosphate contacts are provided by residues Ser178, 203–206 (DDAH), and 234–237 (TLSK). N6-(pyridoxal phosphate)lysine is present on Lys237. Thr351 contacts substrate.

The protein belongs to the class-II pyridoxal-phosphate-dependent aminotransferase family. BioF subfamily. As to quaternary structure, homodimer. It depends on pyridoxal 5'-phosphate as a cofactor.

The enzyme catalyses 6-carboxyhexanoyl-[ACP] + L-alanine + H(+) = (8S)-8-amino-7-oxononanoate + holo-[ACP] + CO2. The protein operates within cofactor biosynthesis; biotin biosynthesis. Functionally, catalyzes the decarboxylative condensation of pimeloyl-[acyl-carrier protein] and L-alanine to produce 8-amino-7-oxononanoate (AON), [acyl-carrier protein], and carbon dioxide. Can also use pimeloyl-CoA instead of pimeloyl-ACP as substrate. The protein is 8-amino-7-oxononanoate synthase (bioF) of Lysinibacillus sphaericus (Bacillus sphaericus).